The sequence spans 213 residues: GTP-binding protein yptV4 (213 aa).

Gly-13–Cys-21 serves as a coordination point for GTP. The short motif at His-35 to Phe-43 is the Effector region element. GTP contacts are provided by residues Asp-61–Gln-65, Asn-119–Asp-122, and Ser-149–Arg-151. Residues Ala-194 to Cys-213 form a disordered region. Positions Gly-202–Cys-213 are enriched in basic and acidic residues. S-geranylgeranyl cysteine attachment occurs at residues Cys-212 and Cys-213.

The protein belongs to the small GTPase superfamily. Rab family.

It is found in the cell membrane. Its function is as follows. Protein transport. Probably involved in vesicular traffic. This chain is GTP-binding protein yptV4 (YPTV4), found in Volvox carteri (Green alga).